Consider the following 83-residue polypeptide: MSRAIWKGPFIDPFFFRKNGSSNSNNKIYSRRSVVSPKFIGREVEIYNGHKWITIKIKEDMIGHKFGEFAFTRKATIHKKKTK.

The protein belongs to the universal ribosomal protein uS19 family.

Its subcellular location is the mitochondrion. The protein is Small ribosomal subunit protein uS19m (RPS19) of Tetraselmis subcordiformis (Marine green alga).